Consider the following 76-residue polypeptide: Protein OPG128 (76 aa).

Residues Cys-17 and Cys-21 are joined by a disulfide bond.

The protein belongs to the orthopoxvirus OPG128 family. In terms of assembly, interacts with sulfhydryl oxidase OPG072; this interaction involves formation of a transient disulfide-bonded intermediate, allowing disulfide bond transfer. Interacts with OPG088; this interaction involves formation of a transient disulfide-bonded intermediate, allowing disulfide bond transfer.

Late protein which probably participates in disulfide bond formation by functioning as a thiol-disulfide transfer protein between membrane-associated OPG072 and OPG08. The complete pathway for formation of disulfide bonds in intracellular virion membrane proteins sequentially involves oxidation of OPG072, OPG128 and OPG08. The protein is Protein OPG128 (OPG128) of Bos taurus (Bovine).